The chain runs to 853 residues: Aminotransferase PigE (853 aa).

503–504 (GT) is a pyridoxal 5'-phosphate binding site. Position 645 is an N6-(pyridoxal phosphate)lysine (Lys-645). Pyridoxal 5'-phosphate is bound at residue Thr-680.

The protein belongs to the class-III pyridoxal-phosphate-dependent aminotransferase family. As to quaternary structure, homodimer. The cofactor is pyridoxal 5'-phosphate.

Its pathway is antibiotic biosynthesis; prodigiosin biosynthesis. Involved in the biosynthesis of 2-methyl-3-n-amyl-pyrrole (MAP), one of the terminal products involved in the biosynthesis of the red antibiotic prodigiosin (Pig). Catalyzes the transamination to the aldehyde group of 3-acetyloctanal, resulting in an aminoketone, which spontaneously cyclizes to yield the dihydro form of MAP (H2MAP). This Serratia sp. (strain ATCC 39006) (Prodigiosinella confusarubida) protein is Aminotransferase PigE.